The primary structure comprises 470 residues: Cysteine--tRNA ligase (470 aa).

A Zn(2+)-binding site is contributed by C28. The short motif at 30–40 (PTVYNYIHIGN) is the 'HIGH' region element. 3 residues coordinate Zn(2+): C211, H236, and E240. The 'KMSKS' region signature appears at 270 to 274 (KMSKS). K273 provides a ligand contact to ATP.

Belongs to the class-I aminoacyl-tRNA synthetase family. Monomer. Zn(2+) is required as a cofactor.

The protein localises to the cytoplasm. The catalysed reaction is tRNA(Cys) + L-cysteine + ATP = L-cysteinyl-tRNA(Cys) + AMP + diphosphate. The chain is Cysteine--tRNA ligase from Enterococcus faecalis (strain ATCC 700802 / V583).